Reading from the N-terminus, the 420-residue chain is Ammonia monooxygenase beta subunit (420 aa).

A signal peptide spans 1-25 (MGIKNLYKRGVMGLYGVAYAVAALA). The Cu cation site is built by H38, H142, and H144. A run of 2 helical transmembrane segments spans residues 193-213 (GIFWHVVWMSIGIFWIGVFTA) and 240-260 (ITWVLAILTLALVWGGYRYTE).

The soluble ammonia monooxygenase is a nonamer composed of three alpha subunits (AmoA), three beta subunits (AmoB) and three gamma subunits (Cytochrome c1 PetC). Cu(2+) serves as cofactor.

The protein resides in the cell membrane. The protein localises to the cytoplasm. It carries out the reaction AH2 + NH4(+) + O2 = hydroxylamine + A + H2O + H(+). With respect to regulation, in vitro, inhibited by acetylene. Part of the ammonia monooxygenase complex, which catalyzes the oxidation of ammonia to hydroxylamine, the first reaction in the process of ammonia oxidation to nitrite. In Nitrosomonas europaea (strain ATCC 19718 / CIP 103999 / KCTC 2705 / NBRC 14298), this protein is Ammonia monooxygenase beta subunit.